The chain runs to 744 residues: MAPSFDHLPDPEEDEYDEEELDISDLRERFEVQLEQGLDTFVVIDGLPEVNEDTKPKLIKFLLRKLDSVGQTKKDSIHMPIGPDGKSFKFAFVEYSSPAEAIAACKALDGVPLDKKHTLRVNKLTDIDRYGREGRIDENYTPPKIEEFTEKEHLRSWLADPAGRGRDQFVMYKDDRVQVFWNNEKDAPESIVDRQHWTESFVQWSPQGTFLTSMHQQGVQLWGGPSWTRQKRFAHPFVNLVDFSPGEKYLTTWSNRPISIGEEGHPALSVDDDGKNYVIWDIETGLPLRSFANLDLPSNSVDAEGNPVKRKIQWPAFKWSSDDKYVARLTQGSSISVYELPRMNLLDKTSIKIDGVMDFDWAPATPHREGVKNYEQLFCYWTPEIGSNPAKVGLMSIPSKEVVRTLNLFSVTDAKLHWQSDASYLCVKVDRHSKSKKSLATSLEIFRVKEKGVPVEVVDSIKDTVINFAWEPKGDRFVIITTAEVVAATAVPPKTSVSFFCPEKVKGNGVGNFKHIRTYDKKNSNAIYWSPKGRFVIVATVHSQQSFDMEFYDMDFEGEKPESDKDLTANLQLMNTADHYGVTDIDWDPTGRFVATSASIWKHTMENGYHLYDFKGEQLREEPVEKFKQWLWRPRPPTLLSKEEQKQIRKNLREYSKVFDQEDADRGASADLAVVEHRRRLLDEWLAWRANIEEDVQAEREDAGLPRDPLEPLKSKMASGDEGQAIEIEEIVEEIVEETEEIIS.

A disordered region spans residues 1 to 20 (MAPSFDHLPDPEEDEYDEEE). The span at 11 to 20 (PEEDEYDEEE) shows a compositional bias: acidic residues. Residues 40–126 (TFVVIDGLPE…HTLRVNKLTD (87 aa)) enclose the RRM domain. WD repeat units follow at residues 193-232 (DRQHWTESFVQWSPQGTFLTSMHQQGVQLWGGPSWTRQKR), 234-290 (AHPF…PLRS), 307-348 (PVKR…LLDK), and 577-622 (ADHY…LREE). Positions 699–714 (EREDAGLPRDPLEPLK) are enriched in basic and acidic residues. Residues 699-722 (EREDAGLPRDPLEPLKSKMASGDE) form a disordered region.

It belongs to the eIF-3 subunit B family. As to quaternary structure, component of the eukaryotic translation initiation factor 3 (eIF-3) complex.

It localises to the cytoplasm. RNA-binding component of the eukaryotic translation initiation factor 3 (eIF-3) complex, which is involved in protein synthesis of a specialized repertoire of mRNAs and, together with other initiation factors, stimulates binding of mRNA and methionyl-tRNAi to the 40S ribosome. The eIF-3 complex specifically targets and initiates translation of a subset of mRNAs involved in cell proliferation. The sequence is that of Eukaryotic translation initiation factor 3 subunit B (prt1) from Sclerotinia sclerotiorum (strain ATCC 18683 / 1980 / Ss-1) (White mold).